The chain runs to 311 residues: Malate dehydrogenase (311 aa).

NAD(+)-binding positions include 7 to 13 (GAAGGIG) and Asp-34. The substrate site is built by Arg-81 and Arg-87. Residues Asn-94 and 117–119 (ITN) contribute to the NAD(+) site. Substrate is bound by residues Asn-119 and Arg-153. His-177 serves as the catalytic Proton acceptor. Met-227 is a binding site for NAD(+).

This sequence belongs to the LDH/MDH superfamily. MDH type 1 family. Homodimer.

The enzyme catalyses (S)-malate + NAD(+) = oxaloacetate + NADH + H(+). Catalyzes the reversible oxidation of malate to oxaloacetate. This chain is Malate dehydrogenase, found in Shewanella baltica (strain OS223).